The chain runs to 351 residues: Photosystem II D2 protein (351 aa).

The chain crosses the membrane as a helical span at residues 39 to 59 (TAYLAIGGWLTGTTFVTSWYT). Position 116 (His-116) interacts with chlorophyll a. Residues 123 to 139 (GFMLRQFELARLIGIRP) traverse the membrane as a helical segment. 2 residues coordinate pheophytin a: Gln-128 and Asn-141. The chain crosses the membrane as a helical span at residues 151 to 164 (VFVSVFLLYPLGQS). His-196 is a chlorophyll a binding site. Residues 206–226 (GALLSAIHGVTVENTLYEDGE) traverse the membrane as a helical segment. His-213 and Phe-260 together coordinate a plastoquinone. His-213 provides a ligand contact to Fe cation. His-267 contributes to the Fe cation binding site. A helical membrane pass occupies residues 277–293 (GLWTSSIGIIGLALNLR).

It belongs to the reaction center PufL/M/PsbA/D family. As to quaternary structure, PSII is composed of 1 copy each of membrane proteins PsbA, PsbB, PsbC, PsbD, PsbE, PsbF, PsbH, PsbI, PsbJ, PsbK, PsbL, PsbM, PsbT, PsbX, PsbY, PsbZ, Psb30/Ycf12, peripheral proteins PsbO, CyanoQ (PsbQ), PsbU, PsbV and a large number of cofactors. It forms dimeric complexes. The D1/D2 heterodimer binds P680, chlorophylls that are the primary electron donor of PSII, and subsequent electron acceptors. It shares a non-heme iron and each subunit binds pheophytin, quinone, additional chlorophylls, carotenoids and lipids. There is also a Cl(-1) ion associated with D1 and D2, which is required for oxygen evolution. The PSII complex binds additional chlorophylls, carotenoids and specific lipids. serves as cofactor.

Its subcellular location is the host cellular thylakoid membrane. It catalyses the reaction 2 a plastoquinone + 4 hnu + 2 H2O = 2 a plastoquinol + O2. Functionally, photosystem II (PSII) is a light-driven water:plastoquinone oxidoreductase that uses light energy to abstract electrons from H(2)O, generating O(2) and a proton gradient subsequently used for ATP formation. It consists of a core antenna complex that captures photons, and an electron transfer chain that converts photonic excitation into a charge separation. The D1/D2 (PsbA/PsbD) reaction center heterodimer binds P680, the primary electron donor of PSII as well as several subsequent electron acceptors. D2 is needed for assembly of a stable PSII complex. This is Photosystem II D2 protein (psbD) from Synechococcus.